A 176-amino-acid chain; its full sequence is MAARGRRAEPQGREAPGPAGGGGGGSRWAESGSGTSPESGDEEVSGAGSSPVSGGVNLFANDGSFLELFKRKMEEEQRQRQEEPPPGPQRPDQSAAAAGPGDPKRKGGPGSTLSFVGKRRGGNKLALKTGIVAKKQKTEDEVLTSKGDAWAKYMAEVKKYKAHQCGDDDKTRPLVK.

Residues 1–12 (MAARGRRAEPQG) show a composition bias toward basic and acidic residues. Residues 1–121 (MAARGRRAEP…TLSFVGKRRG (121 aa)) form a disordered region. A compositionally biased stretch (low complexity) spans 45-56 (SGAGSSPVSGGV). Positions 68–83 (LFKRKMEEEQRQRQEE) are enriched in basic and acidic residues. Residues 90 to 101 (RPDQSAAAAGPG) show a composition bias toward low complexity. K146 is modified (N6-acetyllysine).

As to quaternary structure, part of the telomerase RNA 3' end complex which contains about 488 proteins.

Its activity is regulated as follows. Zn(2+) inhibits the RNase activity while Mg(2+), Ca(2+), Mn(2+), K(+), Na(+), EDTA and EGTA show little effect on the exoribonuclease activity. Functionally, exoribonuclease that is part of the telomerase RNA 3' end processing complex and which has the ability to cleave all four unpaired RNA nucleotides from the 5' end or 3' end with higher efficiency for purine bases. In Homo sapiens (Human), this protein is Telomerase RNA component interacting RNase.